Here is a 192-residue protein sequence, read N- to C-terminus: Phosphoheptose isomerase (192 aa).

Positions 34-192 (LADALGNGKK…LEKRLFGERR (159 aa)) constitute an SIS domain. 49–51 (NGG) is a substrate binding site. Zn(2+)-binding residues include His58 and Glu62. Residues Glu62, 91–92 (ND), 117–119 (STS), Ser122, and Gln169 each bind substrate. Positions 169 and 177 each coordinate Zn(2+).

The protein belongs to the SIS family. GmhA subfamily. In terms of assembly, homotetramer. Requires Zn(2+) as cofactor.

The protein localises to the cytoplasm. It carries out the reaction 2 D-sedoheptulose 7-phosphate = D-glycero-alpha-D-manno-heptose 7-phosphate + D-glycero-beta-D-manno-heptose 7-phosphate. The protein operates within carbohydrate biosynthesis; D-glycero-D-manno-heptose 7-phosphate biosynthesis; D-glycero-alpha-D-manno-heptose 7-phosphate and D-glycero-beta-D-manno-heptose 7-phosphate from sedoheptulose 7-phosphate: step 1/1. In terms of biological role, catalyzes the isomerization of sedoheptulose 7-phosphate in D-glycero-D-manno-heptose 7-phosphate. This chain is Phosphoheptose isomerase, found in Geotalea daltonii (strain DSM 22248 / JCM 15807 / FRC-32) (Geobacter daltonii).